Reading from the N-terminus, the 287-residue chain is Zinc transporter ZIP9 (287 aa).

Residues 4-24 (FLSISLLSLAMLVGCYVAGII) form a helical membrane-spanning segment. A glycan (N-linked (GlcNAc...) asparagine) is linked at asparagine 29. Helical transmembrane passes span 35–55 (LKLV…AVIV), 107–127 (AYIG…DQIG), 147–167 (ITTT…LGAA), 177–197 (LIVF…LVSF), and 211–231 (HLLV…LGLS). Residue asparagine 242 is glycosylated (N-linked (GlcNAc...) asparagine). A helical transmembrane segment spans residues 245-265 (GVAMLFSAGTFLYVATVHVLP). Positions 268-287 (TSTNQSGSSLSPRPLPSGKN) are disordered. N-linked (GlcNAc...) asparagine glycosylation occurs at asparagine 271. The span at 273-287 (SGSSLSPRPLPSGKN) shows a compositional bias: low complexity.

This sequence belongs to the ZIP transporter (TC 2.A.5) family.

The protein resides in the golgi apparatus. Its subcellular location is the trans-Golgi network membrane. The protein localises to the cell membrane. It is found in the cytoplasm. It localises to the perinuclear region. The protein resides in the mitochondrion. Its subcellular location is the nucleus. It catalyses the reaction Zn(2+)(in) = Zn(2+)(out). Transports zinc ions across cell and organelle membranes into the cytoplasm and regulates intracellular zinc homeostasis. Participates in the zinc ions efflux out of the secretory compartments. Regulates intracellular zinc level, resulting in the enhancement of AKT1 and MAPK3/MAPK1 (Erk1/2) phosphorylation in response to the BCR activation. Also functions as a membrane androgen receptor that mediates, through a G protein, the non-classical androgen signaling pathway, characterized by the activation of MAPK3/MAPK1 (Erk1/2) and transcription factors CREB1 or ATF1. This pathway contributes to CLDN1 and CLDN5 expression and tight junction formation between adjacent Sertoli cells. Mediates androgen-induced vascular endothelial cell proliferation through activation of an inhibitory G protein leading to the AKT1 and MAPK3/MAPK1 (Erk1/2) activation which in turn modulate inhibition (phosphorylation) of GSK3B and CCND1 transcription. Moreover, has dual functions as a membrane-bound androgen receptor and as an androgen-dependent zinc transporter both of which are mediated through an inhibitory G protein (Gi) that mediates both MAP kinase and zinc signaling leading to the androgen-dependent apoptotic process. This is Zinc transporter ZIP9 from Rattus norvegicus (Rat).